A 562-amino-acid polypeptide reads, in one-letter code: Dihydroxy-acid dehydratase (562 aa).

Asp80 provides a ligand contact to Mg(2+). Cys121 is a [2Fe-2S] cluster binding site. The Mg(2+) site is built by Asp122 and Lys123. Lys123 carries the post-translational modification N6-carboxylysine. Cys194 contributes to the [2Fe-2S] cluster binding site. Glu446 contributes to the Mg(2+) binding site. Residue Ser472 is the Proton acceptor of the active site.

This sequence belongs to the IlvD/Edd family. Homodimer. The cofactor is [2Fe-2S] cluster. It depends on Mg(2+) as a cofactor.

The catalysed reaction is (2R)-2,3-dihydroxy-3-methylbutanoate = 3-methyl-2-oxobutanoate + H2O. The enzyme catalyses (2R,3R)-2,3-dihydroxy-3-methylpentanoate = (S)-3-methyl-2-oxopentanoate + H2O. It participates in amino-acid biosynthesis; L-isoleucine biosynthesis; L-isoleucine from 2-oxobutanoate: step 3/4. The protein operates within amino-acid biosynthesis; L-valine biosynthesis; L-valine from pyruvate: step 3/4. Functionally, functions in the biosynthesis of branched-chain amino acids. Catalyzes the dehydration of (2R,3R)-2,3-dihydroxy-3-methylpentanoate (2,3-dihydroxy-3-methylvalerate) into 2-oxo-3-methylpentanoate (2-oxo-3-methylvalerate) and of (2R)-2,3-dihydroxy-3-methylbutanoate (2,3-dihydroxyisovalerate) into 2-oxo-3-methylbutanoate (2-oxoisovalerate), the penultimate precursor to L-isoleucine and L-valine, respectively. The protein is Dihydroxy-acid dehydratase of Staphylococcus epidermidis (strain ATCC 35984 / DSM 28319 / BCRC 17069 / CCUG 31568 / BM 3577 / RP62A).